Here is a 424-residue protein sequence, read N- to C-terminus: Serine--tRNA ligase (424 aa).

230 to 232 (TAE) lines the L-serine pocket. 261–263 (RSE) serves as a coordination point for ATP. Residue Glu284 coordinates L-serine. 348-351 (EISS) provides a ligand contact to ATP. Residue Ser384 coordinates L-serine.

It belongs to the class-II aminoacyl-tRNA synthetase family. Type-1 seryl-tRNA synthetase subfamily. In terms of assembly, homodimer. The tRNA molecule binds across the dimer.

Its subcellular location is the cytoplasm. The enzyme catalyses tRNA(Ser) + L-serine + ATP = L-seryl-tRNA(Ser) + AMP + diphosphate + H(+). The catalysed reaction is tRNA(Sec) + L-serine + ATP = L-seryl-tRNA(Sec) + AMP + diphosphate + H(+). Its pathway is aminoacyl-tRNA biosynthesis; selenocysteinyl-tRNA(Sec) biosynthesis; L-seryl-tRNA(Sec) from L-serine and tRNA(Sec): step 1/1. Functionally, catalyzes the attachment of serine to tRNA(Ser). Is also able to aminoacylate tRNA(Sec) with serine, to form the misacylated tRNA L-seryl-tRNA(Sec), which will be further converted into selenocysteinyl-tRNA(Sec). This chain is Serine--tRNA ligase, found in Streptococcus pneumoniae serotype 4 (strain ATCC BAA-334 / TIGR4).